Consider the following 308-residue polypeptide: Apolipoprotein E (308 aa).

A signal peptide spans 1–18; sequence MKFLWAALVVTLLAGCQA. Tandem repeats lie at residues 75 to 96, 97 to 118, 119 to 140, 141 to 162, 163 to 184, 185 to 206, 207 to 224, and 225 to 246. Residues 75–246 form an 8 X 22 AA approximate tandem repeats region; that stretch reads LLIEETMKEV…RLDDVRDQME (172 aa). Residues 153 to 163 are LDL and other lipoprotein receptors binding; it reads HLRKLRKRLLR. 157 to 160 contacts heparin; that stretch reads LRKR. The lipid-binding and lipoprotein association stretch occupies residues 205-281; it reads AIPPSQQLRE…SWFEPLVQDM (77 aa). 220–227 serves as a coordination point for heparin; sequence GQKVRGRL. Residues 257 to 308 are homooligomerization; that stretch reads SQVRLQAEAFQTRLKSWFEPLVQDMQRQWASLVEKVQSSLGISPSTKPSKTK. The specificity for association with VLDL stretch occupies residues 269–281; the sequence is RLKSWFEPLVQDM.

It belongs to the apolipoprotein A1/A4/E family. Homotetramer. May interact with ABCA1; functionally associated with ABCA1 in the biogenesis of HDLs. May interact with APP/A4 amyloid-beta peptide; the interaction is extremely stable in vitro but its physiological significance is unclear. May interact with MAPT. May interact with MAP2. In the cerebrospinal fluid, interacts with secreted SORL1. Interacts with PMEL; this allows the loading of PMEL luminal fragment on ILVs to induce fibril nucleation. In terms of processing, APOE exists as multiple glycosylated and sialylated glycoforms within cells and in plasma. The extent of glycosylation and sialylation are tissue and context specific. Glycated in plasma VLDL. Post-translationally, phosphorylated by FAM20C in the extracellular medium.

Its subcellular location is the secreted. The protein resides in the extracellular space. It is found in the extracellular matrix. It localises to the extracellular vesicle. The protein localises to the endosome. Its subcellular location is the multivesicular body. Its function is as follows. APOE is an apolipoprotein, a protein associating with lipid particles, that mainly functions in lipoprotein-mediated lipid transport between organs via the plasma and interstitial fluids. APOE is a core component of plasma lipoproteins and is involved in their production, conversion and clearance. Apolipoproteins are amphipathic molecules that interact both with lipids of the lipoprotein particle core and the aqueous environment of the plasma. As such, APOE associates with chylomicrons, chylomicron remnants, very low density lipoproteins (VLDL) and intermediate density lipoproteins (IDL) but shows a preferential binding to high-density lipoproteins (HDL). It also binds a wide range of cellular receptors including the LDL receptor/LDLR and the very low-density lipoprotein receptor/VLDLR that mediate the cellular uptake of the APOE-containing lipoprotein particles. Finally, APOE also has a heparin-binding activity and binds heparan-sulfate proteoglycans on the surface of cells, a property that supports the capture and the receptor-mediated uptake of APOE-containing lipoproteins by cells. This is Apolipoprotein E (APOE) from Pteropus alecto (Black flying fox).